Consider the following 499-residue polypeptide: Potassium voltage-gated channel subfamily A member 2 (499 aa).

Residues 1 to 26 form a disordered region; it reads MTVATGDPVDEAAALPGHPQDTYDPE. The interval 1 to 125 is tetramerization domain; it reads MTVATGDPVD…YELGEEAMEM (125 aa). The Cytoplasmic portion of the chain corresponds to 1–160; the sequence is MTVATGDPVD…LLFEYPESSG (160 aa). Residues 161 to 182 form a helical membrane-spanning segment; that stretch reads PARIIAIVSVMVILISIVSFCL. Over 183–221 the chain is Extracellular; sequence ETLPIFRDENEDMHGGGVTFHTYSNSTIGYQQSTSFTDP. An N-linked (GlcNAc...) asparagine glycan is attached at asparagine 207. Residues 222–243 traverse the membrane as a helical segment; the sequence is FFIVETLCIIWFSFEFLVRFFA. Cysteine 244 carries the S-palmitoyl cysteine lipid modification. The Cytoplasmic portion of the chain corresponds to 244–254; sequence CPSKAGFFTNI. A helical membrane pass occupies residues 255–275; sequence MNIIDIVAIIPYFITLGTELA. Residues 276–289 lie on the Extracellular side of the membrane; it reads EKPEDAQQGQQAMS. The helical; Voltage-sensor transmembrane segment at 290 to 310 threads the bilayer; sequence LAILRVIRLVRVFRIFKLSRH. Over 311–325 the chain is Cytoplasmic; it reads SKGLQILGQTLKASM. The segment at 312–325 is S4-S5 linker; sequence KGLQILGQTLKASM. Residues 326–347 traverse the membrane as a helical segment; sequence RELGLLIFFLFIGVILFSSAVY. The Extracellular segment spans residues 348–361; the sequence is FAEADERDSQFPSI. The segment at residues 362–373 is an intramembrane region (helical); that stretch reads PDAFWWAVVSMT. The Selectivity filter signature appears at 374–379; that stretch reads TVGYGD. An intramembrane segment occupies 374–381; the sequence is TVGYGDMV. The Extracellular segment spans residues 382-388; that stretch reads PTTIGGK. A helical transmembrane segment spans residues 389–417; that stretch reads IVGSLCAIAGVLTIALPVPVIVSNFNYFY. Residues 418 to 499 lie on the Cytoplasmic side of the membrane; the sequence is HRETEGEEQA…VNITKMLTDV (82 aa). Tyrosine 429 bears the Phosphotyrosine mark. Residues serine 434, serine 440, serine 441, and serine 449 each carry the phosphoserine modification. The residue at position 458 (tyrosine 458) is a Phosphotyrosine. Serine 468 bears the Phosphoserine mark. The short motif at 497-499 is the PDZ-binding element; the sequence is TDV.

The protein belongs to the potassium channel family. A (Shaker) (TC 1.A.1.2) subfamily. Kv1.2/KCNA2 sub-subfamily. In terms of assembly, homotetramer and heterotetramer with other channel-forming alpha subunits, such as KCNA1, KCNA4, KCNA5, KCNA6 and KCNA7. Channel activity is regulated by interaction with beta subunits, including KCNAB1 and KCNAB2. Identified in a complex with KCNA1 and KCNAB2. Identified in a complex with KCNA5 and KCNAB1. Identified in a complex with KCNA4 and FYN. Interacts with PTK2B. Interacts (via C-terminus) with CTTN. Interacts with ADAM22. Interacts with CNTNAP2. Interacts (via C-terminus) with the PDZ domains of DLG1, DLG2 and DLG4. Interacts (via N-terminal cytoplasmic domain) with RHOA (GTP-bound form); this regulates channel activity by reducing location at the cell surface in response to CHRM1 activation. Interacts with DRD2. Interacts with SIGMAR1; cocaine consumption leads to increased interaction. Interacts with ADAM11. Interacts with LYNX1. Phosphorylated on tyrosine residues; phosphorylation increases in response to ischemia. Phosphorylated on tyrosine residues by activated PTK2B/PYK2. Phosphorylation on tyrosine residues suppresses ion channel activity. Phosphorylated on tyrosine residues in response to CHRM1 activation; this abolishes interaction with CTTN. This is probably due to endocytosis of the phosphorylated channel subunits. Phosphorylated on serine residues in response to increased cAMP levels; phosphorylation is apparently not catalyzed by PKA. In terms of processing, N-glycosylated, with complex, sialylated N-glycans. In terms of tissue distribution, detected in brain. Detected in cerebellum. Detected in mitral cells in the olfactory bulb. Detected in cochlea. Detected in cerebellum, particularly in the basket cell axon plexus and in the terminal regions around Purkinje cells (at protein level). Detected in juxtaparanodal regions in sciatic nerve. Detected in Schwann cells from sciatic nerve. Detected in dopamine neurons in substantia nigra. Detected in large myelinated fibers in juxtaparanodes in the CA3 and CA1 areas of the hippocampus. Detected in brain, in punctae on fiber tracts in brain stem and spinal cord, and on axons in the juxtaparanodal regions of the node of Ranvier (at protein level). Detected in dopamine neurons in the midbrain.

It is found in the cell membrane. The protein resides in the membrane. The protein localises to the cell projection. It localises to the axon. Its subcellular location is the synapse. It is found in the endoplasmic reticulum membrane. The protein resides in the lamellipodium membrane. The protein localises to the synaptosome. It localises to the presynaptic cell membrane. Its subcellular location is the dendrite. It is found in the perikaryon. The protein resides in the cell junction. The protein localises to the paranodal septate junction. The enzyme catalyses K(+)(in) = K(+)(out). With respect to regulation, inhibited by 4-aminopyridine (4-AP), dendrotoxin (DTX) and charybdotoxin (CTX), but not by tetraethylammonium (TEA). Inhibited by tityustoxin-K alpha (TsTX-Kalpha), a toxin that is highly specific for KCNA2. Inhibited by maurotoxin. Inhibited by kappaM conotoxins kappaM-RIIIJ and kappaM-RIIIK. Functionally, voltage-gated potassium channel that mediates transmembrane potassium transport in excitable membranes, primarily in the brain and the central nervous system, but also in the cardiovascular system. Prevents aberrant action potential firing and regulates neuronal output. Forms tetrameric potassium-selective channels through which potassium ions pass in accordance with their electrochemical gradient. The channel alternates between opened and closed conformations in response to the voltage difference across the membrane. Can form functional homotetrameric channels and heterotetrameric channels that contain variable proportions of KCNA1, KCNA2, KCNA4, KCNA5, KCNA6, KCNA7, and possibly other family members as well; channel properties depend on the type of alpha subunits that are part of the channel. Channel properties are modulated by cytoplasmic beta subunits that regulate the subcellular location of the alpha subunits and promote rapid inactivation of delayed rectifier potassium channels. In vivo, membranes probably contain a mixture of heteromeric potassium channel complexes, making it difficult to assign currents observed in intact tissues to any particular potassium channel family member. Homotetrameric KCNA2 forms a delayed-rectifier potassium channel that opens in response to membrane depolarization, followed by slow spontaneous channel closure. In contrast, a heteromultimer formed by KCNA2 and KCNA4 shows rapid inactivation. Contributes to the regulation of action potentials in neurons. KCNA2-containing channels play a presynaptic role and prevent hyperexcitability and aberrant action potential firing. Response to toxins that are selective for KCNA1, respectively for KCNA2, suggests that heteromeric potassium channels composed of both KCNA1 and KCNA2 play a role in pacemaking and regulate the output of deep cerebellar nuclear neurons. Response to toxins that are selective for KCNA2-containing potassium channels suggests that in Purkinje cells, dendritic subthreshold KCNA2-containing potassium channels prevent random spontaneous calcium spikes, suppressing dendritic hyperexcitability without hindering the generation of somatic action potentials, and thereby play an important role in motor coordination. KCNA2-containing channels play a role in GABAergic transmission from basket cells to Purkinje cells in the cerebellum, and thereby play an import role in motor coordination. Plays a role in the induction of long-term potentiation of neuron excitability in the CA3 layer of the hippocampus. May function as down-stream effector for G protein-coupled receptors and inhibit GABAergic inputs to basolateral amygdala neurons. May contribute to the regulation of neurotransmitter release, such as gamma-aminobutyric acid (GABA). Contributes to the regulation of the axonal release of the neurotransmitter dopamine. Reduced KCNA2 expression plays a role in the perception of neuropathic pain after peripheral nerve injury, but not acute pain. Plays a role in the regulation of the time spent in non-rapid eye movement (NREM) sleep. In Mus musculus (Mouse), this protein is Potassium voltage-gated channel subfamily A member 2 (Kcna2).